Consider the following 117-residue polypeptide: Large ribosomal subunit protein bL20 (117 aa).

Belongs to the bacterial ribosomal protein bL20 family.

Binds directly to 23S ribosomal RNA and is necessary for the in vitro assembly process of the 50S ribosomal subunit. It is not involved in the protein synthesizing functions of that subunit. In Limosilactobacillus fermentum (strain NBRC 3956 / LMG 18251) (Lactobacillus fermentum), this protein is Large ribosomal subunit protein bL20.